Consider the following 117-residue polypeptide: UPF0102 protein RSKD131_0118 (117 aa).

It belongs to the UPF0102 family.

This Cereibacter sphaeroides (strain KD131 / KCTC 12085) (Rhodobacter sphaeroides) protein is UPF0102 protein RSKD131_0118.